The following is a 354-amino-acid chain: Phospho-N-acetylmuramoyl-pentapeptide-transferase (354 aa).

10 helical membrane-spanning segments follow: residues 23 to 43, 66 to 86, 88 to 108, 130 to 150, 161 to 181, 193 to 213, 230 to 250, 257 to 277, 282 to 302, and 331 to 351; these read FSFFIAFCLTVYLMPKFIAWA, TPTMGGLVFIGAAVFATLLCA, LDNVFVVASLLCLVGFSALGF, LAVQVLIGLVVSSLLYFHGEL, FALLDLGVFAIVFWTIVIVAA, GLASVPAIFSLLTLGVFAYIC, VGETVIIAAALIGSLMGFLWF, VFMGDSGSLSVGAYIGLMGVM, ILLIIIGFVFVMETLSVILQV, and KIIVRFWLIAILANLIALTAL.

Belongs to the glycosyltransferase 4 family. MraY subfamily. Mg(2+) is required as a cofactor.

The protein localises to the cell inner membrane. The enzyme catalyses UDP-N-acetyl-alpha-D-muramoyl-L-alanyl-gamma-D-glutamyl-meso-2,6-diaminopimeloyl-D-alanyl-D-alanine + di-trans,octa-cis-undecaprenyl phosphate = di-trans,octa-cis-undecaprenyl diphospho-N-acetyl-alpha-D-muramoyl-L-alanyl-D-glutamyl-meso-2,6-diaminopimeloyl-D-alanyl-D-alanine + UMP. It functions in the pathway cell wall biogenesis; peptidoglycan biosynthesis. In terms of biological role, catalyzes the initial step of the lipid cycle reactions in the biosynthesis of the cell wall peptidoglycan: transfers peptidoglycan precursor phospho-MurNAc-pentapeptide from UDP-MurNAc-pentapeptide onto the lipid carrier undecaprenyl phosphate, yielding undecaprenyl-pyrophosphoryl-MurNAc-pentapeptide, known as lipid I. This chain is Phospho-N-acetylmuramoyl-pentapeptide-transferase, found in Campylobacter curvus (strain 525.92).